The sequence spans 631 residues: DNA mismatch repair protein MutL (631 aa).

2 disordered regions span residues 337–362 and 400–429; these read PHSP…ELQS and AVQS…RAEL.

Belongs to the DNA mismatch repair MutL/HexB family.

Its function is as follows. This protein is involved in the repair of mismatches in DNA. It is required for dam-dependent methyl-directed DNA mismatch repair. May act as a 'molecular matchmaker', a protein that promotes the formation of a stable complex between two or more DNA-binding proteins in an ATP-dependent manner without itself being part of a final effector complex. This is DNA mismatch repair protein MutL from Shewanella oneidensis (strain ATCC 700550 / JCM 31522 / CIP 106686 / LMG 19005 / NCIMB 14063 / MR-1).